The following is a 548-amino-acid chain: Membrane protein insertase YidC (548 aa).

5 helical membrane-spanning segments follow: residues 6-26 (NLIL…WESD), 357-377 (NWGV…FPLT), 424-444 (LGGC…YWAL), 455-475 (FALW…PILM), and 503-523 (PIIF…YWLV).

It belongs to the OXA1/ALB3/YidC family. Type 1 subfamily. As to quaternary structure, interacts with the Sec translocase complex via SecD. Specifically interacts with transmembrane segments of nascent integral membrane proteins during membrane integration.

The protein localises to the cell inner membrane. In terms of biological role, required for the insertion and/or proper folding and/or complex formation of integral membrane proteins into the membrane. Involved in integration of membrane proteins that insert both dependently and independently of the Sec translocase complex, as well as at least some lipoproteins. Aids folding of multispanning membrane proteins. The protein is Membrane protein insertase YidC of Aeromonas hydrophila subsp. hydrophila (strain ATCC 7966 / DSM 30187 / BCRC 13018 / CCUG 14551 / JCM 1027 / KCTC 2358 / NCIMB 9240 / NCTC 8049).